The primary structure comprises 224 residues: Respiratory supercomplex factor 2, mitochondrial (224 aa).

Over 1 to 13 the chain is Mitochondrial intermembrane; it reads MKILTQDEIEAHR. A helical transmembrane segment spans residues 14–38; the sequence is SHTLKGGIEGALAGFAISAIIFKVL. Topologically, residues 39 to 47 are mitochondrial matrix; that stretch reads PRRYPKFKP. The chain crosses the membrane as a helical span at residues 48–75; it reads STLTWSIKTALWITPPTVLTAICAEEAS. Residues 76–103 are Mitochondrial intermembrane-facing; the sequence is NNFDATMYGSGSSSEDALDEHRRWKSLS. The HIG1 domain maps to 89 to 180; sequence SEDALDEHRR…YENKLHPNKQ (92 aa). The helical transmembrane segment at 104–133 threads the bilayer; that stretch reads TKDKFVEGLSNNKYKIITGAWAASLYGSWV. Over 134–142 the chain is Mitochondrial matrix; it reads IVNKDPIMT. The helical transmembrane segment at 143–173 threads the bilayer; the sequence is KAQKIVQARMYAQFITVGLLLASVGLSMYEN. Residues 174–184 are Mitochondrial intermembrane-facing; it reads KLHPNKQKVNE. A helical membrane pass occupies residues 185–204; it reads MRRWENALRVAEEEERLEKE. Residues 205 to 224 are Mitochondrial matrix-facing; it reads GRRTGYVSNEERINSKIFKS.

Associates with a subpopulation of the cytochrome bc1-cytochrome c oxidase supercomplexes. Associates in substoichiometric amounts with complex IV. Interacts with COX3.

It localises to the mitochondrion membrane. Its function is as follows. Assembly factor that plays a role in the assembly of the respiratory chain supercomplexes (SCs) composed of ubiquinol-cytochrome c oxidoreductase (cytochrome b-c1 complex, complex III, CIII) and cytochrome c oxidase (complex IV, CIV). May be required for late-stage assembly of the COX12 and COX13 subunits. Required for the generation and maintenance of a normal proton motive force (PMF) across the inner mitochondrial membrane (IMM) by preventing proton leakage through an inactive population of CIV that accumulates when RCF1 and/or RCF2 proteins are absent. This chain is Respiratory supercomplex factor 2, mitochondrial (RCF2), found in Saccharomyces cerevisiae (strain ATCC 204508 / S288c) (Baker's yeast).